The primary structure comprises 633 residues: Probably inactive receptor-like protein kinase At2g46850 (633 aa).

Residues 1–28 (MPPLFLPSSSSALFLLLLLLLTLQTLTS) form the signal peptide. The Extracellular segment spans residues 29 to 285 (ISLSQPQALR…IKKHNGKKLT (257 aa)). Asparagine 45, asparagine 69, and asparagine 231 each carry an N-linked (GlcNAc...) asparagine glycan. Residues 286 to 306 (VLAGVLAPLFILGSLLALFCL) form a helical membrane-spanning segment. Over 307–633 (LKRPVTSHKD…SPDSIYLPKT (327 aa)) the chain is Cytoplasmic. The Protein kinase domain occupies 355-633 (FQDSQKLTQG…SPDSIYLPKT (279 aa)). ATP is bound by residues 361–369 (LTQGKTGTI) and lysine 384.

Belongs to the protein kinase superfamily. Ser/Thr protein kinase family.

The protein resides in the membrane. This Arabidopsis thaliana (Mouse-ear cress) protein is Probably inactive receptor-like protein kinase At2g46850.